Here is a 180-residue protein sequence, read N- to C-terminus: Zinc finger protein 740 (180 aa).

Residues 1-11 (MMLSQIASKQA) show a composition bias toward polar residues. Residues 1-62 (MMLSQIASKQ…KEDDSLAEAS (62 aa)) form a disordered region. Residue Lys-9 forms a Glycyl lysine isopeptide (Lys-Gly) (interchain with G-Cter in SUMO2) linkage. A Phosphoserine modification is found at Ser-19. Over residues 31-56 (CKPRFDLSSKGHRKDSDKSRNRKEDD) the composition is skewed to basic and acidic residues. 2 consecutive C2H2-type zinc fingers follow at residues 88–110 (FICEHCFGAFRSSYHLKRHVLIH) and 116–138 (FECDVCDMRFIQKYHLERHKRVH). The C2H2-type 3; atypical zinc finger occupies 144-166 (YQCERCHQCFSRTDRLLRHKRMC).

The protein belongs to the krueppel C2H2-type zinc-finger protein family.

The protein resides in the nucleus. Its function is as follows. May be involved in transcriptional regulation. This chain is Zinc finger protein 740 (Znf740), found in Mus musculus (Mouse).